An 878-amino-acid chain; its full sequence is Phosphoenolpyruvate carboxylase (878 aa).

Residues His137 and Lys545 contribute to the active site.

The protein belongs to the PEPCase type 1 family. Mg(2+) is required as a cofactor.

The catalysed reaction is oxaloacetate + phosphate = phosphoenolpyruvate + hydrogencarbonate. In terms of biological role, forms oxaloacetate, a four-carbon dicarboxylic acid source for the tricarboxylic acid cycle. The sequence is that of Phosphoenolpyruvate carboxylase from Photorhabdus laumondii subsp. laumondii (strain DSM 15139 / CIP 105565 / TT01) (Photorhabdus luminescens subsp. laumondii).